The primary structure comprises 239 residues: Large ribosomal subunit protein uL30 (239 aa).

Positions 1 to 37 are disordered; that stretch reads MSKFVPENVQKKLARDEKLRKAKAEQRKASSAQMKQR. Residues 9–28 are compositionally biased toward basic and acidic residues; that stretch reads VQKKLARDEKLRKAKAEQRK.

Belongs to the universal ribosomal protein uL30 family.

This Tetrahymena thermophila protein is Large ribosomal subunit protein uL30 (RPL7).